Reading from the N-terminus, the 262-residue chain is Catechol O-methyltransferase domain-containing protein 1 (262 aa).

Residues 12 to 32 (AALALGSAALGAAFATGLFLG) traverse the membrane as a helical; Signal-anchor for type II membrane protein segment. S-adenosyl-L-methionine is bound by residues Asp-108, 110–111 (GT), Ser-116, Glu-134, Val-135, Ala-163, Asp-185, Asp-187, and Tyr-194.

The protein belongs to the class I-like SAM-binding methyltransferase superfamily. Cation-dependent O-methyltransferase family. Homodimer.

It is found in the membrane. Functionally, putative O-methyltransferase. This is Catechol O-methyltransferase domain-containing protein 1 (COMTD1) from Homo sapiens (Human).